A 426-amino-acid polypeptide reads, in one-letter code: Phosphomethylpyrimidine synthase (426 aa).

Residues Asn65, Met94, Tyr123, His162, Ser184–Gly186, Asp225–Arg228, and Glu264 contribute to the substrate site. His268 contacts Zn(2+). Tyr291 contacts substrate. His332 lines the Zn(2+) pocket. 3 residues coordinate [4Fe-4S] cluster: Cys408, Cys411, and Cys415.

Belongs to the ThiC family. [4Fe-4S] cluster serves as cofactor.

It catalyses the reaction 5-amino-1-(5-phospho-beta-D-ribosyl)imidazole + S-adenosyl-L-methionine = 4-amino-2-methyl-5-(phosphooxymethyl)pyrimidine + CO + 5'-deoxyadenosine + formate + L-methionine + 3 H(+). It functions in the pathway cofactor biosynthesis; thiamine diphosphate biosynthesis. Catalyzes the synthesis of the hydroxymethylpyrimidine phosphate (HMP-P) moiety of thiamine from aminoimidazole ribotide (AIR) in a radical S-adenosyl-L-methionine (SAM)-dependent reaction. The chain is Phosphomethylpyrimidine synthase from Methanocaldococcus jannaschii (strain ATCC 43067 / DSM 2661 / JAL-1 / JCM 10045 / NBRC 100440) (Methanococcus jannaschii).